The primary structure comprises 82 residues: Small ribosomal subunit protein bS18 (82 aa).

The segment covering 1–10 has biased composition (polar residues); sequence MTDTNQNSSR. The disordered stretch occupies residues 1–21; the sequence is MTDTNQNSSRRPFHRRRKTCP.

Belongs to the bacterial ribosomal protein bS18 family. In terms of assembly, part of the 30S ribosomal subunit. Forms a tight heterodimer with protein bS6.

Binds as a heterodimer with protein bS6 to the central domain of the 16S rRNA, where it helps stabilize the platform of the 30S subunit. This Bartonella tribocorum (strain CIP 105476 / IBS 506) protein is Small ribosomal subunit protein bS18.